The primary structure comprises 379 residues: MSQSGADPEQRQQASEADAMAATFRASEHQHIRYNPLQDEWVLVSAHRMKRPWQGQVEPQLLKTVPRHDPLNPLCPGATRANGEVNPPYDGTFLFDNDFPALQPDAPDPGPSDHPLFRVEAARGVCKVMCFHPWSDVTLPLMSVPEIRAVIDAWASVTEELGAQYPWVQIFENKGAMMGCSNPHPHCQVWASNFLPDIAQREERSQQTYHNQHGKPLLLEYGHQELLRKERLVLTSEYWIVLVPFWAVWPFQTLLLPRRHVQRLPELTPAERDDLASTMKKLLTKYDNLFETSFPYSMGWHGAPMGLKTGATCDHWQLHAHYYPPLLRSATVRKFMVGYEMLAQAQRDLTPEQAAERLRVLPEVHYCLTQKDKETAATA.

Residues 1-15 (MSQSGADPEQRQQAS) are compositionally biased toward polar residues. Residues 1–20 (MSQSGADPEQRQQASEADAM) form a disordered region. Zn(2+) is bound at residue cysteine 75. Residues alanine 81, 97–98 (ND), and asparagine 173 each bind UDP-alpha-D-glucose. Position 184 (histidine 184) interacts with Zn(2+). Catalysis depends on histidine 186, which acts as the Tele-UMP-histidine intermediate. Glutamine 188 contacts UDP-alpha-D-glucose. The Zn(2+) site is built by glutamate 202, histidine 301, histidine 319, and histidine 321. Residues 334 to 337 (KFMV) and 339 to 340 (YE) contribute to the UDP-alpha-D-glucose site.

It belongs to the galactose-1-phosphate uridylyltransferase type 1 family. In terms of assembly, homodimer. The cofactor is Zn(2+).

The catalysed reaction is alpha-D-galactose 1-phosphate + UDP-alpha-D-glucose = alpha-D-glucose 1-phosphate + UDP-alpha-D-galactose. The protein operates within carbohydrate metabolism; galactose metabolism. Functionally, plays an important role in galactose metabolism. This is Galactose-1-phosphate uridylyltransferase (Galt) from Rattus norvegicus (Rat).